The chain runs to 327 residues: tRNA uridine(34) hydroxylase (327 aa).

The Rhodanese domain maps to 130–224; sequence LDEDTVVLDT…YGKDPEVQGE (95 aa). Catalysis depends on Cys-184, which acts as the Cysteine persulfide intermediate.

It belongs to the TrhO family.

It catalyses the reaction uridine(34) in tRNA + AH2 + O2 = 5-hydroxyuridine(34) in tRNA + A + H2O. Functionally, catalyzes oxygen-dependent 5-hydroxyuridine (ho5U) modification at position 34 in tRNAs. This Streptococcus thermophilus (strain ATCC BAA-250 / LMG 18311) protein is tRNA uridine(34) hydroxylase.